The sequence spans 346 residues: Dihydroorotate dehydrogenase (quinone) (346 aa).

Residues 62-66 and Thr86 contribute to the FMN site; that span reads AGMDK. Lys66 lines the substrate pocket. 111-115 contacts substrate; sequence NRMGF. FMN is bound by residues Asn142 and Asn175. A substrate-binding site is contributed by Asn175. The Nucleophile role is filled by Ser178. A substrate-binding site is contributed by Asn180. Residues Lys211 and Val239 each coordinate FMN. Residue 240–241 coordinates substrate; it reads NT. Residues Gly261, Gly289, and 310–311 contribute to the FMN site; that span reads YT.

The protein belongs to the dihydroorotate dehydrogenase family. Type 2 subfamily. Monomer. The cofactor is FMN.

The protein localises to the cell membrane. The enzyme catalyses (S)-dihydroorotate + a quinone = orotate + a quinol. Its pathway is pyrimidine metabolism; UMP biosynthesis via de novo pathway; orotate from (S)-dihydroorotate (quinone route): step 1/1. Catalyzes the conversion of dihydroorotate to orotate with quinone as electron acceptor. This is Dihydroorotate dehydrogenase (quinone) from Thermus thermophilus (strain ATCC 27634 / DSM 579 / HB8).